A 365-amino-acid chain; its full sequence is Anthranilate phosphoribosyltransferase (365 aa).

Residues Gly96, 99–100 (GD), Thr104, 106–109 (NIST), 124–132 (KHGNRSVSS), and Ser136 contribute to the 5-phospho-alpha-D-ribose 1-diphosphate site. Gly96 lines the anthranilate pocket. Residue Ser108 participates in Mg(2+) binding. Anthranilate is bound at residue Asn127. Arg182 lines the anthranilate pocket. Mg(2+)-binding residues include Asp240 and Glu241.

Belongs to the anthranilate phosphoribosyltransferase family. As to quaternary structure, homodimer. The cofactor is Mg(2+).

It carries out the reaction N-(5-phospho-beta-D-ribosyl)anthranilate + diphosphate = 5-phospho-alpha-D-ribose 1-diphosphate + anthranilate. Its pathway is amino-acid biosynthesis; L-tryptophan biosynthesis; L-tryptophan from chorismate: step 2/5. Its function is as follows. Catalyzes the transfer of the phosphoribosyl group of 5-phosphorylribose-1-pyrophosphate (PRPP) to anthranilate to yield N-(5'-phosphoribosyl)-anthranilate (PRA). The polypeptide is Anthranilate phosphoribosyltransferase (Colwellia psychrerythraea (strain 34H / ATCC BAA-681) (Vibrio psychroerythus)).